Here is a 444-residue protein sequence, read N- to C-terminus: tRNA-2-methylthio-N(6)-dimethylallyladenosine synthase (444 aa).

The MTTase N-terminal domain maps to P4–A120. Positions 13, 49, 83, 155, 159, and 162 each coordinate [4Fe-4S] cluster. A Radical SAM core domain is found at R141 to R372. The TRAM domain occupies A374–T438.

This sequence belongs to the methylthiotransferase family. MiaB subfamily. In terms of assembly, monomer. Requires [4Fe-4S] cluster as cofactor.

It localises to the cytoplasm. It carries out the reaction N(6)-dimethylallyladenosine(37) in tRNA + (sulfur carrier)-SH + AH2 + 2 S-adenosyl-L-methionine = 2-methylsulfanyl-N(6)-dimethylallyladenosine(37) in tRNA + (sulfur carrier)-H + 5'-deoxyadenosine + L-methionine + A + S-adenosyl-L-homocysteine + 2 H(+). In terms of biological role, catalyzes the methylthiolation of N6-(dimethylallyl)adenosine (i(6)A), leading to the formation of 2-methylthio-N6-(dimethylallyl)adenosine (ms(2)i(6)A) at position 37 in tRNAs that read codons beginning with uridine. This chain is tRNA-2-methylthio-N(6)-dimethylallyladenosine synthase, found in Synechococcus sp. (strain JA-2-3B'a(2-13)) (Cyanobacteria bacterium Yellowstone B-Prime).